A 160-amino-acid chain; its full sequence is SsrA-binding protein (160 aa).

This sequence belongs to the SmpB family.

It is found in the cytoplasm. Functionally, required for rescue of stalled ribosomes mediated by trans-translation. Binds to transfer-messenger RNA (tmRNA), required for stable association of tmRNA with ribosomes. tmRNA and SmpB together mimic tRNA shape, replacing the anticodon stem-loop with SmpB. tmRNA is encoded by the ssrA gene; the 2 termini fold to resemble tRNA(Ala) and it encodes a 'tag peptide', a short internal open reading frame. During trans-translation Ala-aminoacylated tmRNA acts like a tRNA, entering the A-site of stalled ribosomes, displacing the stalled mRNA. The ribosome then switches to translate the ORF on the tmRNA; the nascent peptide is terminated with the 'tag peptide' encoded by the tmRNA and targeted for degradation. The ribosome is freed to recommence translation, which seems to be the essential function of trans-translation. The chain is SsrA-binding protein from Cronobacter sakazakii (strain ATCC BAA-894) (Enterobacter sakazakii).